Consider the following 587-residue polypeptide: Polyphenol oxidase E, chloroplastic (587 aa).

The N-terminal 87 residues, 1–87 (MSSSSSITTT…AANLAPLATA (87 aa)), are a transit peptide targeting the chloroplast. Cystine bridges form between cysteine 98–cysteine 114 and cysteine 113–cysteine 180. Positions 179, 197, 206, 328, 332, and 363 each coordinate Cu cation. A cross-link (2'-(S-cysteinyl)-histidine (Cys-His)) is located at residues 183–197 (CNGAYKVGGKELQVH).

This sequence belongs to the tyrosinase family. Cu(2+) serves as cofactor.

It is found in the plastid. The protein localises to the chloroplast thylakoid lumen. It catalyses the reaction 2 catechol + O2 = 2 1,2-benzoquinone + 2 H2O. Catalyzes the oxidation of mono- and o-diphenols to o-diquinones. This chain is Polyphenol oxidase E, chloroplastic, found in Solanum lycopersicum (Tomato).